The primary structure comprises 373 residues: Glutamate 5-kinase (373 aa).

Position 15 (lysine 15) interacts with ATP. Residues serine 55, aspartate 142, and asparagine 154 each contribute to the substrate site. ATP contacts are provided by residues threonine 174 to aspartate 175 and threonine 216 to lysine 222. Positions serine 281–lysine 359 constitute a PUA domain.

It belongs to the glutamate 5-kinase family.

The protein resides in the cytoplasm. The enzyme catalyses L-glutamate + ATP = L-glutamyl 5-phosphate + ADP. The protein operates within amino-acid biosynthesis; L-proline biosynthesis; L-glutamate 5-semialdehyde from L-glutamate: step 1/2. In terms of biological role, catalyzes the transfer of a phosphate group to glutamate to form L-glutamate 5-phosphate. The polypeptide is Glutamate 5-kinase (Geobacter metallireducens (strain ATCC 53774 / DSM 7210 / GS-15)).